The primary structure comprises 263 residues: Small ribosomal subunit protein bS1c (263 aa).

3 S1 motif domains span residues 27 to 96, 114 to 178, and 192 to 260; these read GDIV…LSIR, DSLL…LSHR, and GNII…LSMK.

It belongs to the bacterial ribosomal protein bS1 family.

It localises to the plastid. The protein resides in the chloroplast. The protein is Small ribosomal subunit protein bS1c (rps1) of Pyropia yezoensis (Susabi-nori).